The sequence spans 540 residues: Phosphoenolpyruvate carboxykinase (ATP) (540 aa).

Arginine 65 contacts substrate. Residue lysine 87 is modified to N6-acetyllysine. Tyrosine 207 and lysine 213 together coordinate substrate. Residues lysine 213, histidine 232, and 248–256 (GLSGTGKTT) contribute to the ATP site. Mn(2+) is bound by residues lysine 213 and histidine 232. Aspartate 269 is a binding site for Mn(2+). Residues glutamate 297, arginine 333, 449-450 (RI), and threonine 455 each bind ATP. Substrate is bound at residue arginine 333. An N6-acetyllysine modification is found at lysine 523.

This sequence belongs to the phosphoenolpyruvate carboxykinase (ATP) family. As to quaternary structure, monomer. Mn(2+) serves as cofactor.

Its subcellular location is the cytoplasm. The catalysed reaction is oxaloacetate + ATP = phosphoenolpyruvate + ADP + CO2. It functions in the pathway carbohydrate biosynthesis; gluconeogenesis. In terms of biological role, involved in the gluconeogenesis. Catalyzes the conversion of oxaloacetate (OAA) to phosphoenolpyruvate (PEP) through direct phosphoryl transfer between the nucleoside triphosphate and OAA. The protein is Phosphoenolpyruvate carboxykinase (ATP) of Escherichia coli O127:H6 (strain E2348/69 / EPEC).